A 426-amino-acid polypeptide reads, in one-letter code: UPF0597 protein CLD_2825 (426 aa).

The protein belongs to the UPF0597 family.

The chain is UPF0597 protein CLD_2825 from Clostridium botulinum (strain Okra / Type B1).